The following is a 451-amino-acid chain: Tubby-like F-box protein 12 (451 aa).

The region spanning 57–112 (SRWVGLPPELLRDVMKRLEEGESNWPSRKDVVACAAVCRTWREICKDIVQSPEICG) is the F-box domain. Residues 387-406 (LEQQQQQQQQNHASSSSSAS) show a composition bias toward low complexity. A disordered region spans residues 387 to 407 (LEQQQQQQQQNHASSSSSASD).

The protein belongs to the TUB family. In terms of tissue distribution, ubiquitous.

The sequence is that of Tubby-like F-box protein 12 (TULP12) from Oryza sativa subsp. japonica (Rice).